Reading from the N-terminus, the 555-residue chain is Glutamine--tRNA ligase (555 aa).

The 'HIGH' region signature appears at 35–45; sequence PEPNGYLHIGH. ATP is bound by residues 36 to 38 and 42 to 48; these read EPN and HIGHAKS. Residues Asp68 and Tyr213 each contribute to the L-glutamine site. ATP contacts are provided by residues Thr232 and 262-263; that span reads RL. The 'KMSKS' region motif lies at 269 to 273; the sequence is ITSKR.

Belongs to the class-I aminoacyl-tRNA synthetase family. As to quaternary structure, monomer.

The protein resides in the cytoplasm. It catalyses the reaction tRNA(Gln) + L-glutamine + ATP = L-glutaminyl-tRNA(Gln) + AMP + diphosphate. The polypeptide is Glutamine--tRNA ligase (Ectopseudomonas mendocina (strain ymp) (Pseudomonas mendocina)).